The primary structure comprises 463 residues: Putative ankyrin repeat protein R579 (463 aa).

8 ANK repeats span residues 124–154 (LKTD…KCTI), 156–181 (SITR…SENI), 242–271 (KEKN…QFNP), 273–299 (IYLW…DYRP), 300–328 (HIDR…VSQE), 329–355 (NINE…MGAD), 356–385 (INYK…DITT), and 387–416 (GSND…TITL).

This chain is Putative ankyrin repeat protein R579, found in Acanthamoeba polyphaga (Amoeba).